The following is a 296-amino-acid chain: MNNNKLLLVDGMALLFRAFFATAVHRNFMINDSGVPTNGVNGFLKHLITAVETFQPTHVVCCWDMGSKTYRNDLFQDYKANRSAPPVELIPQFDLAKEAAAELGIMNIGFAGYEADDCIGTLADLFANEADITVVTGDRDLLQLLTDKVSVALLQKGIGNYKVYTKETFYEETGVMPKALIDIKALMGDSSDNYPGVKGIGEKTAYKLIREYETIDRLLENLSLLPKGQQGKIQQGLSDLEMSRKLAEIHCSVPLACTLKDALFTLQMEQAADMLRRHQIKGIERMLEKLNAREIV.

A 5'-3' exonuclease domain is found at 175–262; it reads VMPKALIDIK…VPLACTLKDA (88 aa).

Functionally, 5'-3' exonuclease acting preferentially on double-stranded DNA. The sequence is that of 5'-3' exonuclease (ypcP) from Bacillus subtilis (strain 168).